Reading from the N-terminus, the 644-residue chain is Exoribonuclease 2 (644 aa).

Positions 189-516 (REDLTALDFV…NHRLLKAVIK (328 aa)) constitute an RNB domain. Positions 561–643 (DTRFAAEIVD…ETRSIIARPV (83 aa)) constitute an S1 motif domain.

The protein belongs to the RNR ribonuclease family. RNase II subfamily.

The protein resides in the cytoplasm. The catalysed reaction is Exonucleolytic cleavage in the 3'- to 5'-direction to yield nucleoside 5'-phosphates.. Involved in mRNA degradation. Hydrolyzes single-stranded polyribonucleotides processively in the 3' to 5' direction. The protein is Exoribonuclease 2 of Escherichia coli (strain SMS-3-5 / SECEC).